The primary structure comprises 383 residues: MSTWLLPENIADVLPSEARKIEELRRHLLDRFRSYGYEMVMPPLLEYIESLLTGGGHDLNLRTFKLVDQLSGRTLGLRADITPQVARIDAHLLNRQGVTRLCYAGNVAHTRPRGLHATREQIQIGAEIYGHAGLEADLEIQQLMLDALRLAGLAKVRLDLCHAGVLAALIEAEPAAAELGQSLYDALAGKDVPRLVELTANLTPVIRDALRALPTLYGDASVLDEARARLPNAPAIARALDDLAFLASQVEGAEVMIDLADLRGYAYHSGVMFSAYVDGVPNAVARGGRYDHVGQAYGRARAATGFSLDLREVARISPVEARSSAILAPWQHDEALRVSVAALRDAGEVVIQALPGHEHDLDEFAFDRVLVERNGNWVVEARA.

This sequence belongs to the class-II aminoacyl-tRNA synthetase family. HisZ subfamily. In terms of assembly, heteromultimer composed of HisG and HisZ subunits.

It localises to the cytoplasm. The protein operates within amino-acid biosynthesis; L-histidine biosynthesis; L-histidine from 5-phospho-alpha-D-ribose 1-diphosphate: step 1/9. Functionally, required for the first step of histidine biosynthesis. May allow the feedback regulation of ATP phosphoribosyltransferase activity by histidine. This chain is ATP phosphoribosyltransferase regulatory subunit, found in Paraburkholderia phytofirmans (strain DSM 17436 / LMG 22146 / PsJN) (Burkholderia phytofirmans).